A 453-amino-acid polypeptide reads, in one-letter code: Probable glycine dehydrogenase (decarboxylating) subunit 1 (453 aa).

This sequence belongs to the GcvP family. N-terminal subunit subfamily. In terms of assembly, the glycine cleavage system is composed of four proteins: P, T, L and H. In this organism, the P 'protein' is a heterodimer of two subunits.

It catalyses the reaction N(6)-[(R)-lipoyl]-L-lysyl-[glycine-cleavage complex H protein] + glycine + H(+) = N(6)-[(R)-S(8)-aminomethyldihydrolipoyl]-L-lysyl-[glycine-cleavage complex H protein] + CO2. In terms of biological role, the glycine cleavage system catalyzes the degradation of glycine. The P protein binds the alpha-amino group of glycine through its pyridoxal phosphate cofactor; CO(2) is released and the remaining methylamine moiety is then transferred to the lipoamide cofactor of the H protein. This is Probable glycine dehydrogenase (decarboxylating) subunit 1 from Dictyoglomus thermophilum (strain ATCC 35947 / DSM 3960 / H-6-12).